Consider the following 144-residue polypeptide: Mediator of RNA polymerase II transcription subunit 21 (144 aa).

The protein belongs to the Mediator complex subunit 21 family. As to quaternary structure, component of the Mediator complex, which is composed of MED1, MED4, MED6, MED7, MED8, MED9, MED10, MED11, MED12, MED13, MED13L, MED14, MED15, MED16, MED17, MED18, MED19, MED20, MED21, MED22, MED23, MED24, MED25, MED26, MED27, MED29, MED30, MED31, CCNC, CDK8 and CDC2L6/CDK11. The MED12, MED13, CCNC and CDK8 subunits form a distinct module termed the CDK8 module. Mediator containing the CDK8 module is less active than Mediator lacking this module in supporting transcriptional activation. Individual preparations of the Mediator complex lacking one or more distinct subunits have been variously termed ARC, CRSP, DRIP, PC2, SMCC and TRAP. Interacts with PPARG. Interacts with THRA in a ligand-dependent fashion.

Its subcellular location is the nucleus. Component of the Mediator complex, a coactivator involved in the regulated transcription of nearly all RNA polymerase II-dependent genes. Mediator functions as a bridge to convey information from gene-specific regulatory proteins to the basal RNA polymerase II transcription machinery. Mediator is recruited to promoters by direct interactions with regulatory proteins and serves as a scaffold for the assembly of a functional preinitiation complex with RNA polymerase II and the general transcription factors. This chain is Mediator of RNA polymerase II transcription subunit 21 (MED21), found in Pongo abelii (Sumatran orangutan).